A 188-amino-acid chain; its full sequence is Protein SSX4 (188 aa).

The KRAB-related domain maps to 20–83; sequence KLRKAFDDIA…KRAADFHGND (64 aa). Residues 116–127 show a composition bias toward basic and acidic residues; the sequence is PAEEENGLKEVP. Positions 116–167 are disordered; it reads PAEEENGLKEVPEASGPQNDGKQLCPPGNPSTLEKINKTSGPKRGKHAWTHR. The span at 145–155 shows a compositional bias: polar residues; sequence PSTLEKINKTS. Positions 156–167 are enriched in basic residues; it reads GPKRGKHAWTHR.

Belongs to the SSX family.

Functionally, could act as a modulator of transcription. This Homo sapiens (Human) protein is Protein SSX4 (SSX4).